The following is a 169-amino-acid chain: Endoribonuclease YbeY (169 aa).

Zn(2+) contacts are provided by His128, His132, and His138.

It belongs to the endoribonuclease YbeY family. Zn(2+) is required as a cofactor.

The protein resides in the cytoplasm. Single strand-specific metallo-endoribonuclease involved in late-stage 70S ribosome quality control and in maturation of the 3' terminus of the 16S rRNA. This Cyanothece sp. (strain PCC 7425 / ATCC 29141) protein is Endoribonuclease YbeY.